Consider the following 562-residue polypeptide: Long-chain-fatty-acid--CoA ligase (562 aa).

It belongs to the ATP-dependent AMP-binding enzyme family. Requires Mg(2+) as cofactor.

The protein resides in the membrane. The catalysed reaction is a long-chain fatty acid + ATP + CoA = a long-chain fatty acyl-CoA + AMP + diphosphate. It functions in the pathway lipid metabolism; fatty acid beta-oxidation. In terms of biological role, catalyzes the esterification, concomitant with transport, of exogenous long-chain fatty acids into metabolically active CoA thioesters for subsequent degradation or incorporation into phospholipids. The sequence is that of Long-chain-fatty-acid--CoA ligase (fadD) from Haemophilus influenzae (strain ATCC 51907 / DSM 11121 / KW20 / Rd).